The chain runs to 138 residues: Small ribosomal subunit protein uS11c (138 aa).

It belongs to the universal ribosomal protein uS11 family. In terms of assembly, part of the 30S ribosomal subunit.

The protein localises to the plastid. It localises to the chloroplast. The protein is Small ribosomal subunit protein uS11c of Illicium oligandrum (Star anise).